A 318-amino-acid polypeptide reads, in one-letter code: NLP effector protein 9 (318 aa).

The N-terminal stretch at 1–19 is a signal peptide; the sequence is MRLFAFLWSSVAFLSTVQA. A compositionally biased stretch (low complexity) spans 24–35; it reads TASQTQDDSSTP. Disordered regions lie at residues 24 to 43 and 50 to 93; these read TASQTQDDSSTPTPTPPDKY and LRTK…PAPT. The span at 55 to 65 shows a compositional bias: polar residues; sequence PMATPNRTIMP. Residue asparagine 60 is glycosylated (N-linked (GlcNAc...) asparagine). Residues 73–93 are compositionally biased toward pro residues; sequence PEPPTPEPTYLPTLSPTPAPT. Positions 185 to 195 match the Conserved undecapeptide motif I motif; it reads AIMYSWYFPKD. The Hepta-peptide GHRHDWE motif II signature appears at 202–208; the sequence is GHRHDWE.

It belongs to the Necrosis inducing protein (NPP1) family.

It is found in the secreted. In terms of biological role, secreted effector that contributes to virulence during infection by P.capsici. Induces distinct chlorosis at 3 days after inoculation of host C.annuum leaves, and all the chlorotic areas gradually turn brown and become moderately necrotic at 7 days after inoculation. Caused only small necrotic areas at 7 days after non-host N.benthamiana leaves infection. The polypeptide is NLP effector protein 9 (Phytophthora capsici).